The following is a 486-amino-acid chain: 6-phosphogluconate dehydrogenase, decarboxylating 2 (486 aa).

NADP(+) is bound by residues 12-17 (GLAVMG), 35-37 (NRT), 79-81 (VKA), and N107. Substrate contacts are provided by residues N107 and 133-135 (SGG). Residue K188 is the Proton acceptor of the active site. Residue 191–192 (HN) coordinates substrate. E195 (proton donor) is an active-site residue. Substrate-binding residues include Y196, K266, R293, R456, and H462. The Microbody targeting signal signature appears at 484–486 (SKI).

Belongs to the 6-phosphogluconate dehydrogenase family. Forms homodimer. Forms heterodimers with PGD1 or PGD3.

The protein resides in the cytoplasm. It is found in the cytosol. The protein localises to the peroxisome. The catalysed reaction is 6-phospho-D-gluconate + NADP(+) = D-ribulose 5-phosphate + CO2 + NADPH. It participates in carbohydrate degradation; pentose phosphate pathway; D-ribulose 5-phosphate from D-glucose 6-phosphate (oxidative stage): step 3/3. Its function is as follows. Catalyzes the oxidative decarboxylation of 6-phosphogluconate to ribulose 5-phosphate and CO(2), with concomitant reduction of NADP to NADPH. Required for guided growth of the male gametophytes and interaction between the pollen tube and the ovule. This chain is 6-phosphogluconate dehydrogenase, decarboxylating 2, found in Arabidopsis thaliana (Mouse-ear cress).